Consider the following 216-residue polypeptide: Endoplasmic reticulum vesicle protein 25 (216 aa).

Positions 1 to 21 are cleaved as a signal peptide; sequence MMVSLKSSLFFMLALLTVVHA. Residues 22 to 184 lie on the Lumenal side of the membrane; the sequence is LNFDIPAKTN…TNESTNERVK (163 aa). One can recognise a GOLD domain in the interval 34–150; that stretch reads PFCLREYVGE…LEPVEADIRR (117 aa). Residues 185–205 traverse the membrane as a helical segment; it reads NFAYLTFISLFVLVIWQILYL. Residues 206-216 are Cytoplasmic-facing; the sequence is RSFFQRKHLIP.

The protein belongs to the EMP24/GP25L family.

The protein resides in the endoplasmic reticulum membrane. It is found in the golgi apparatus membrane. Constituent of COPII-coated endoplasmic reticulum-derived transport vesicles. Required for efficient transport of a subset of secretory proteins to the Golgi. Facilitates retrograde transport from the Golgi to the endoplasmic reticulum. The chain is Endoplasmic reticulum vesicle protein 25 (erv25) from Schizosaccharomyces pombe (strain 972 / ATCC 24843) (Fission yeast).